The sequence spans 25 residues: Histone H1.1 (25 aa).

One can recognise an H15 domain in the interval 1–25; sequence MVSEAIAALKEREGSSEFAIGKKKE. The disordered stretch occupies residues 1 to 25; that stretch reads MVSEAIAALKEREGSSEFAIGKKKE. The span at 9–25 shows a compositional bias: basic and acidic residues; sequence LKEREGSSEFAIGKKKE.

The protein resides in the nucleus. It is found in the chromosome. In terms of biological role, histones H1 are necessary for the condensation of nucleosome chains into higher-order structures. The polypeptide is Histone H1.1 (Triticum aestivum (Wheat)).